The chain runs to 103 residues: N(4)-acetylcytidine amidohydrolase (103 aa).

The ASCH domain maps to 6 to 101; it reads ITFFQRFQDD…QTQFYVIEFK (96 aa). Lysine 21 functions as the Proton acceptor in the catalytic mechanism. Threonine 24 (nucleophile) is an active-site residue. Glutamate 74 acts as the Proton donor in catalysis.

Belongs to the N(4)-acetylcytidine amidohydrolase family.

The enzyme catalyses N(4)-acetylcytidine + H2O = cytidine + acetate + H(+). It catalyses the reaction N(4)-acetyl-2'-deoxycytidine + H2O = 2'-deoxycytidine + acetate + H(+). It carries out the reaction N(4)-acetylcytosine + H2O = cytosine + acetate + H(+). Its function is as follows. Catalyzes the hydrolysis of N(4)-acetylcytidine (ac4C). This chain is N(4)-acetylcytidine amidohydrolase (yqfB), found in Escherichia coli (strain K12 / MC4100 / BW2952).